The primary structure comprises 421 residues: Protein ECERIFERUM 2 (421 aa).

Position 1 is an N-acetylmethionine (M1).

This sequence belongs to the plant acyltransferase family. Expressed at high levels in the epidermis of stems and young siliques. Expressed in flowers.

The protein localises to the endoplasmic reticulum. The protein resides in the nucleus. Involved in biosynthesis of the epicuticular wax. Plays a role in very-long-chain fatty acid (VLCFA) biosynthesis and is required for C28 fatty acid elongation in stem. Despite its classification as a BAHD acyltransferase based on sequence homology, CER2 does not seem to share the catalytic mechanism of the members of the BAHD family. The polypeptide is Protein ECERIFERUM 2 (CER2) (Arabidopsis thaliana (Mouse-ear cress)).